Consider the following 390-residue polypeptide: Caveolae-associated protein 1 (390 aa).

The residue at position 1 (M1) is an N-acetylmethionine. The disordered stretch occupies residues 1-40; that stretch reads MEDPTLYIVERPLPGYPDAEAPEPSSAGAQAAEEPSGAGS. A required for homotrimerization and for interaction with CAVIN2 and CAVIN3 region spans residues 1-98; that stretch reads MEDPTLYIVE…IQGELSKLGK (98 aa). Over residues 22-40 the composition is skewed to low complexity; that stretch reads PEPSSAGAQAAEEPSGAGS. S36, S40, and S46 each carry phosphoserine. The interval 52-62 is nuclear export signal; the sequence is VLVLSLLDKII. The segment at 53–75 is leucine-zipper 1; that stretch reads LVLSLLDKIIGAVDQIQLTQAQL. Residue K116 forms a Glycyl lysine isopeptide (Lys-Gly) (interchain with G-Cter in SUMO2) linkage. S118 carries the phosphoserine modification. K122 is covalently cross-linked (Glycyl lysine isopeptide (Lys-Gly) (interchain with G-Cter in SUMO2)). The nuclear localization signal stretch occupies residues 136-152; the sequence is KKLEVNEAELLRRRNFK. A Phosphotyrosine modification is found at Y156. K161 participates in a covalent cross-link: Glycyl lysine isopeptide (Lys-Gly) (interchain with G-Cter in SUMO1); alternate. A Glycyl lysine isopeptide (Lys-Gly) (interchain with G-Cter in SUMO2); alternate cross-link involves residue K161. Residue K165 forms a Glycyl lysine isopeptide (Lys-Gly) (interchain with G-Cter in SUMO2) linkage. The segment at 166–186 is leucine-zipper 2; sequence LSISKSLKESEALPEKEGEEL. Phosphoserine is present on residues S167 and S169. A Glycyl lysine isopeptide (Lys-Gly) (interchain with G-Cter in SUMO2) cross-link involves residue K170. Phosphoserine is present on residues S171 and S175. Residues 172-181 show a composition bias toward basic and acidic residues; sequence LKESEALPEK. The segment at 172 to 201 is disordered; that stretch reads LKESEALPEKEGEELGEGERPEEDAAALEL. Residues 182–201 show a composition bias toward acidic residues; it reads EGEELGEGERPEEDAAALEL. Residues 199-282 are a coiled coil; sequence LELSSDEAVE…RMNKLGTRLV (84 aa). Phosphoserine occurs at positions 202 and 203. A nuclear localization signal region spans residues 233 to 249; it reads KKAFSKEKMEKTKVRTR. Residues 257-297 are leucine-zipper 3; the sequence is LKTKENLEKTRHTLEKRMNKLGTRLVPAERREKLKTSRDKL. S300 carries the post-translational modification Phosphoserine. At T302 the chain carries Phosphothreonine. Y308 is subject to Phosphotyrosine. A Glycyl lysine isopeptide (Lys-Gly) (interchain with G-Cter in SUMO2) cross-link involves residue K326. The interval 344-366 is disordered; sequence VGADDDEGGAERGEAGDLRRGSS. A compositionally biased stretch (basic and acidic residues) spans 352-365; it reads GAERGEAGDLRRGS. Phosphoserine is present on residues S365, S366, S379, S387, and S389.

This sequence belongs to the CAVIN family. As to quaternary structure, component of the CAVIN complex composed of CAVIN1, CAVIN2, CAVIN3 and CAVIN4. Homotrimer. Interacts with TTF1. Interacts with RNA polymerase I subunit POLR1A/RPA1. Binds the 3' end of pre-rRNA. Interacts with transcription factor ZNF148. Interacts with LIPE in the adipocyte cytoplasm. Interacts with CAV1 and CAVIN3. Interacts with CAVIN2. Interacts with CAVIN4 and CAV3. Post-translationally, phosphorylated. Present in active and inactive forms. Changes in phosphorylation pattern may alter activity. Phosphorylation at Tyr-156 is essential for its functionin the regulation of ribosomal transcriptional activity. Five truncated forms are found in the caveolae. These are thought to be the result of proteolysis and may be phosphorylation-dependent. In terms of processing, monoubiquitinated.

The protein resides in the membrane. It is found in the caveola. Its subcellular location is the cell membrane. It localises to the microsome. The protein localises to the endoplasmic reticulum. The protein resides in the cytoplasm. It is found in the cytosol. Its subcellular location is the mitochondrion. It localises to the nucleus. Functionally, plays an important role in caveolae formation and organization. Essential for the formation of caveolae in all tissues. Core component of the CAVIN complex which is essential for recruitment of the complex to the caveolae in presence of calveolin-1 (CAV1). Essential for normal oligomerization of CAV1. Promotes ribosomal transcriptional activity in response to metabolic challenges in the adipocytes and plays an important role in the formation of the ribosomal transcriptional loop. Dissociates transcription complexes paused by DNA-bound TTF1, thereby releasing both RNA polymerase I and pre-RNA from the template. The caveolae biogenesis pathway is required for the secretion of proteins such as GASK1A. The polypeptide is Caveolae-associated protein 1 (Homo sapiens (Human)).